The following is a 184-amino-acid chain: uncharacterized protein (184 aa).

To M.tuberculosis Rv0487.

This is an uncharacterized protein from Mycobacterium leprae (strain TN).